The chain runs to 312 residues: Undecaprenyl-diphosphatase (312 aa).

The next 7 membrane-spanning stretches (helical) occupy residues 74 to 94 (GVAF…WYFW), 122 to 142 (VSIG…KVFI), 154 to 174 (VAIA…ERIG), 183 to 203 (LDIR…IPGV), 226 to 246 (FSFL…LKTL), 254 to 274 (VGLV…YIAI), and 288 to 308 (IFIW…ISGV).

It belongs to the UppP family.

Its subcellular location is the cell inner membrane. The enzyme catalyses di-trans,octa-cis-undecaprenyl diphosphate + H2O = di-trans,octa-cis-undecaprenyl phosphate + phosphate + H(+). Its function is as follows. Catalyzes the dephosphorylation of undecaprenyl diphosphate (UPP). Confers resistance to bacitracin. This Trichodesmium erythraeum (strain IMS101) protein is Undecaprenyl-diphosphatase.